The sequence spans 401 residues: E3 ubiquitin-protein ligase NHLRC1 (401 aa).

The RING-type zinc finger occupies 28-74; sequence CKVCFERFGHWQQRRPRNLPCGHVVCLACVAALAHPRTLGLECPFCR. NHL repeat units lie at residues 115–159, 163–206, 207–247, 250–303, 304–352, and 353–396; these read TLTC…FDSG, AHQF…FDFF, GQIK…LEAD, EGVL…FNST, MQLI…LGKP, and EEFP…FKVM.

As to quaternary structure, interacts with AGL. Interacts (via the NHL repeats) with EPM2A/laforin. Forms a complex with EPM2A/laforin and HSP70. Interacts with PRDM8.

Its subcellular location is the endoplasmic reticulum. It localises to the nucleus. It carries out the reaction S-ubiquitinyl-[E2 ubiquitin-conjugating enzyme]-L-cysteine + [acceptor protein]-L-lysine = [E2 ubiquitin-conjugating enzyme]-L-cysteine + N(6)-ubiquitinyl-[acceptor protein]-L-lysine.. Its pathway is protein modification; protein ubiquitination. Its function is as follows. E3 ubiquitin-protein ligase. Together with the phosphatase EPM2A/laforin, appears to be involved in the clearance of toxic polyglucosan and protein aggregates via multiple pathways. In complex with EPM2A/laforin and HSP70, suppresses the cellular toxicity of misfolded proteins by promoting their degradation through the ubiquitin-proteasome system (UPS). Ubiquitinates the glycogen-targeting protein phosphatase subunits PPP1R3C/PTG and PPP1R3D in a laforin-dependent manner and targets them for proteasome-dependent degradation, thus decreasing glycogen accumulation. Polyubiquitinates EPM2A/laforin and ubiquitinates AGL and targets them for proteasome-dependent degradation. Also promotes proteasome-independent protein degradation through the macroautophagy pathway. The polypeptide is E3 ubiquitin-protein ligase NHLRC1 (Nhlrc1) (Mus musculus (Mouse)).